We begin with the raw amino-acid sequence, 377 residues long: Chorismate synthase (377 aa).

Arg-47 lines the NADP(+) pocket. Residues Arg-124–Ser-126, Asn-252–Ser-253, Gly-296, Lys-311–Ser-315, and Arg-338 each bind FMN.

It belongs to the chorismate synthase family. Requires FMNH2 as cofactor.

It catalyses the reaction 5-O-(1-carboxyvinyl)-3-phosphoshikimate = chorismate + phosphate. It functions in the pathway metabolic intermediate biosynthesis; chorismate biosynthesis; chorismate from D-erythrose 4-phosphate and phosphoenolpyruvate: step 7/7. Functionally, catalyzes the anti-1,4-elimination of the C-3 phosphate and the C-6 proR hydrogen from 5-enolpyruvylshikimate-3-phosphate (EPSP) to yield chorismate, which is the branch point compound that serves as the starting substrate for the three terminal pathways of aromatic amino acid biosynthesis. This reaction introduces a second double bond into the aromatic ring system. The polypeptide is Chorismate synthase (Methanococcus vannielii (strain ATCC 35089 / DSM 1224 / JCM 13029 / OCM 148 / SB)).